The sequence spans 229 residues: Putative ankyrin repeat protein L148 (229 aa).

ANK repeat units follow at residues 70–95 (ILDY…PDNY), 96–126 (IGTE…DLRI), 127–156 (NNDY…NCQA), and 157–186 (YNNA…SVAA).

This chain is Putative ankyrin repeat protein L148, found in Acanthamoeba polyphaga (Amoeba).